Here is a 94-residue protein sequence, read N- to C-terminus: Small ribosomal subunit protein uS19 (94 aa).

This sequence belongs to the universal ribosomal protein uS19 family.

Protein S19 forms a complex with S13 that binds strongly to the 16S ribosomal RNA. This is Small ribosomal subunit protein uS19 from Wolbachia pipientis wMel.